A 340-amino-acid polypeptide reads, in one-letter code: Ava biosynthesis cluster protein G (340 aa).

A run of 4 helical transmembrane segments spans residues 15 to 35, 81 to 101, 118 to 138, and 148 to 168; these read WSAFWLWAIIGGYFAAFNIWN, FMISTDFITSACSVIALLQFV, AFFVMMGFGAPSGIMVAVHAF, and LSIMLTGVLTICFLATSFLCI. Residue Asn-171 is glycosylated (N-linked (GlcNAc...) asparagine). A run of 2 helical transmembrane segments spans residues 219–239 and 315–335; these read FSSVYLIIPEVMNWTLGYVAF and SALTAVCLLLRYVGLILWLQI.

The protein resides in the membrane. It participates in secondary metabolite biosynthesis. In terms of biological role, part of the cluster that mediates the biosynthesis of a highly modified cyclo-arginine-tryptophan dipeptide (cRW). The first step of the pathway is perfornmed by the arginine-containing cyclodipeptide synthase (RCPDS) avaA that acts as the scaffold-generating enzyme and is responsible for formation of the cyclo-Arg-Trp (cRW) diketopiperazine. AvaB then acts as a multifunctional flavoenzyme that is responsible for generating the cyclo-Arg-formylkynurenine DKP, which can be deformylated by avaC. AvaB then further catalyzes an additional N-oxidation followed by cyclization and dehydration. The next step is an N-acetylation of the guanidine group catalyzed by the arginine N-acetyltransferase avaD. The roles of the additional enzymes identified within the ava cluster still have to be determined. This is Ava biosynthesis cluster protein G from Aspergillus versicolor.